The sequence spans 657 residues: Glycogen debranching enzyme (657 aa).

Asp336 functions as the Nucleophile in the catalytic mechanism. Glu371 acts as the Proton donor in catalysis. Residues 460–481 (ANGEENRDGTNNNYSNNHGKEG) form a disordered region.

Belongs to the glycosyl hydrolase 13 family.

The enzyme catalyses Hydrolysis of (1-&gt;6)-alpha-D-glucosidic linkages to branches with degrees of polymerization of three or four glucose residues in limit dextrin.. It functions in the pathway glycan degradation; glycogen degradation. Its function is as follows. Removes maltotriose and maltotetraose chains that are attached by 1,6-alpha-linkage to the limit dextrin main chain, generating a debranched limit dextrin. The polypeptide is Glycogen debranching enzyme (Escherichia coli O157:H7).